The chain runs to 535 residues: Dimethylaniline monooxygenase [N-oxide-forming] 2 (535 aa).

N-acetylalanine is present on A2. FAD contacts are provided by residues G9–S13, E32, V40–W41, and N61–T62. Residues T60–N61 and S195–D198 contribute to the NADP(+) site. K492 participates in a covalent cross-link: Glycyl lysine isopeptide (Lys-Gly) (interchain with G-Cter in SUMO). Residues F510–C530 form a helical membrane-spanning segment.

It belongs to the FMO family. The cofactor is FAD. It depends on Mg(2+) as a cofactor.

It localises to the microsome membrane. The protein localises to the endoplasmic reticulum membrane. Its function is as follows. Catalyzes the oxidative metabolism of numerous xenobiotics, including mainly therapeutic drugs and insecticides that contain a soft nucleophile, most commonly nitrogen and sulfur and participates to their bioactivation. This Pan troglodytes (Chimpanzee) protein is Dimethylaniline monooxygenase [N-oxide-forming] 2.